The following is a 377-amino-acid chain: Chaperone protein DnaJ (377 aa).

Positions 3–67 (DYYDLLGVGR…QTRARYDQFG (65 aa)) constitute a J domain. The CR-type zinc-finger motif lies at 133 to 215 (GQEQEIKIPH…CGGQGVRQVR (83 aa)). Residues Cys-146, Cys-149, Cys-163, Cys-166, Cys-189, Cys-192, Cys-203, and Cys-206 each coordinate Zn(2+). 4 CXXCXGXG motif repeats span residues 146 to 153 (CDTCGGSG), 163 to 170 (CGTCGGAG), 189 to 196 (CPNCGGTG), and 203 to 210 (CNACGGQG).

Belongs to the DnaJ family. Homodimer. Zn(2+) serves as cofactor.

It is found in the cytoplasm. Its function is as follows. Participates actively in the response to hyperosmotic and heat shock by preventing the aggregation of stress-denatured proteins and by disaggregating proteins, also in an autonomous, DnaK-independent fashion. Unfolded proteins bind initially to DnaJ; upon interaction with the DnaJ-bound protein, DnaK hydrolyzes its bound ATP, resulting in the formation of a stable complex. GrpE releases ADP from DnaK; ATP binding to DnaK triggers the release of the substrate protein, thus completing the reaction cycle. Several rounds of ATP-dependent interactions between DnaJ, DnaK and GrpE are required for fully efficient folding. Also involved, together with DnaK and GrpE, in the DNA replication of plasmids through activation of initiation proteins. In Parasynechococcus marenigrum (strain WH8102), this protein is Chaperone protein DnaJ.